A 309-amino-acid polypeptide reads, in one-letter code: G-protein coupled receptor 35 (309 aa).

Topologically, residues 1 to 24 (MNGTYNTCGSSDLTWPPAIKLGFY) are extracellular. N2 carries N-linked (GlcNAc...) asparagine glycosylation. The chain crosses the membrane as a helical span at residues 25–45 (AYLGVLLVLGLLLNSLALWVF). Topologically, residues 46-56 (CCRMQQWTETR) are cytoplasmic. Residues 57-77 (IYMTNLAVADLCLLCTLPFVL) traverse the membrane as a helical segment. Residues 78–90 (HSLRDTSDTPLCQ) lie on the Extracellular side of the membrane. C89 and C162 form a disulfide bridge. Residues 91–112 (LSQGIYLTNRYMSISLVTAIAV) form a helical membrane-spanning segment. Topologically, residues 113-135 (DRYVAVRHPLRARGLRSPRQAAA) are cytoplasmic. Residues 136-156 (VCAVLWVLVIGSLVARWLLGI) form a helical membrane-spanning segment. Residues 157 to 174 (QEGGFCFRSTRHNFNSMA) are Extracellular-facing. Residues 175–195 (FPLLGFYLPLAVVVFCSLKVV) traverse the membrane as a helical segment. The Cytoplasmic portion of the chain corresponds to 196–218 (TALAQRPPTDVGQAEATRKAARM). A helical membrane pass occupies residues 219–239 (VWANLLVFVVCFLPLHVGLTV). The Extracellular portion of the chain corresponds to 240-258 (RLAVGWNACALLETIRRAL). Residues 259–279 (YITSKLSDANCCLDAICYYYM) traverse the membrane as a helical segment. At 280 to 309 (AKEFQEASALAVAPSAKAHKSQDSLCVTLA) the chain is on the cytoplasmic side. Phosphoserine is present on residues S287 and S294. A phosphoserine; by GRK5 and GRK6 mark is found at S300 and S303. T307 bears the Phosphothreonine mark.

Belongs to the G-protein coupled receptor 1 family. In terms of assembly, interacts with GNA13. Interacts with ARRB2. In terms of processing, multiply phosphorylated in clusters of serines and threonines in the C-terminal tail. Phosphorylation of Ser-300 and Ser-303 is mediated by GRK5 and/or GRK6. As to expression, predominantly expressed in immune and gastrointestinal tissues.

It is found in the cell membrane. Functionally, G-protein coupled receptor that binds to several ligands including the tryptophan metabolite kynurenic acid (KYNA), lysophosphatidic acid (LPA) or 5-hydroxyindoleacetic acid (5-HIAA) with high affinity, leading to rapid and transient activation of numerous intracellular signaling pathways. Plays a role in neutrophil recruitment to sites of inflammation and bacterial clearance through the major serotonin metabolite 5-HIAA that acts as a physiological ligand. Stimulates lipid metabolism, thermogenic, and anti-inflammatory gene expression in adipose tissue once activated by kynurenic acid. In macrophages, activation by lysophosphatidic acid promotes GPR35-induced signaling with a distinct transcriptional profile characterized by TNF production associated with ERK and NF-kappa-B activation. In turn, induces chemotaxis of macrophages. The polypeptide is G-protein coupled receptor 35 (GPR35) (Homo sapiens (Human)).